The following is a 156-amino-acid chain: MNIKKNLMKIDIQNVCKKNIFFPKKKYFFLWLKNIFKNKKIEITIRIVDMLEMKFLNKKYKKKNSLTNVLSFQSPDSIKIKHRFLNYIGDIILCAPYINKEANILKKKKIELWAHMTIHSTLHLLHYSHKDSKSKKNMQKTEIYIMKKLGYNNPYN.

Residues histidine 119, histidine 123, and histidine 129 each coordinate Zn(2+).

The protein belongs to the endoribonuclease YbeY family. Zn(2+) serves as cofactor.

Its subcellular location is the cytoplasm. In terms of biological role, single strand-specific metallo-endoribonuclease involved in late-stage 70S ribosome quality control and in maturation of the 3' terminus of the 16S rRNA. This Buchnera aphidicola subsp. Cinara cedri (strain Cc) protein is Endoribonuclease YbeY.